The following is a 173-amino-acid chain: NADH-ubiquinone oxidoreductase chain 6 (173 aa).

5 consecutive transmembrane segments (helical) span residues 1–21 (MTYF…AVAS), 27–47 (YGVV…LSLG), 48–68 (VSFV…VVFV), 91–111 (GVSF…IGCL), and 139–159 (CGVG…FVVL).

It belongs to the complex I subunit 6 family.

The protein resides in the mitochondrion membrane. The catalysed reaction is a ubiquinone + NADH + 5 H(+)(in) = a ubiquinol + NAD(+) + 4 H(+)(out). Functionally, core subunit of the mitochondrial membrane respiratory chain NADH dehydrogenase (Complex I) that is believed to belong to the minimal assembly required for catalysis. Complex I functions in the transfer of electrons from NADH to the respiratory chain. The immediate electron acceptor for the enzyme is believed to be ubiquinone. The sequence is that of NADH-ubiquinone oxidoreductase chain 6 (MT-ND6) from Fratercula cirrhata (Tufted puffin).